A 285-amino-acid polypeptide reads, in one-letter code: HTH-type transcriptional regulator MurR (285 aa).

The 77-residue stretch at 1–77 (MLYLTKISNA…MALIGEYSAS (77 aa)) folds into the HTH rpiR-type domain. The H-T-H motif DNA-binding region spans 37–56 (SRQMAKQLGISQSSIVKFAQ). One can recognise an SIS domain in the interval 128-268 (IIDVISKAQF…FVGLVQLNDV (141 aa)).

As to quaternary structure, homotetramer.

The protein operates within amino-sugar metabolism; N-acetylmuramate degradation [regulation]. Represses the expression of the murPQ operon involved in the uptake and degradation of N-acetylmuramic acid (MurNAc). Binds to two adjacent inverted repeats within the operator region. MurNAc 6-phosphate, the substrate of MurQ, is the specific inducer that weakens binding of MurR to the operator. The polypeptide is HTH-type transcriptional regulator MurR (Escherichia coli (strain B / BL21-DE3)).